Consider the following 591-residue polypeptide: L-fucose isomerase (591 aa).

Active-site proton acceptor residues include Glu-337 and Asp-361. Residues Glu-337, Asp-361, and His-528 each coordinate Mn(2+).

The protein belongs to the L-fucose isomerase family. In terms of assembly, homohexamer. Mn(2+) is required as a cofactor.

The protein resides in the cytoplasm. It catalyses the reaction L-fucose = L-fuculose. It participates in carbohydrate degradation; L-fucose degradation; L-lactaldehyde and glycerone phosphate from L-fucose: step 1/3. In terms of biological role, converts the aldose L-fucose into the corresponding ketose L-fuculose. In Escherichia coli (strain UTI89 / UPEC), this protein is L-fucose isomerase.